The following is a 3166-amino-acid chain: Intermembrane lipid transfer protein VPS13A (3166 aa).

Positions 3-116 constitute a Chorein N-terminal domain; sequence FESVVVEVLN…LMETKQQELK (114 aa). TPR repeat units follow at residues 212-245 and 373-406; these read LFAY…ENIV and LTSK…QQAE. T831 carries the phosphothreonine modification. A Phosphoserine modification is found at S835. The FFAT signature appears at 838–844; that stretch reads EFFDAPC. The segment covering 1343 to 1359 has biased composition (polar residues); sequence APSSANKDPETMTSGVT. A disordered region spans residues 1343–1365; it reads APSSANKDPETMTSGVTSPPDHS. At S1410 the chain carries Phosphoserine. TPR repeat units lie at residues 1806–1840 and 1999–2034; these read AIVE…TLSK and ISVF…VPED. The SHR-BD domain maps to 2202 to 2447; it reads VAFHSPYWMV…VYYTWADPVG (246 aa). Required for mitochondrial localization regions lie at residues 2607 to 3166 and 2743 to 3166; these read LQPH…SPRL and EYEV…SPRL. TPR repeat units follow at residues 2716 to 2750 and 2852 to 2890; these read ADLV…VSSV and ILGL…PEEF. The required for lipid droplet localization stretch occupies residues 2945–3019; it reads PAGLREGITR…SSTFQGIKRA (75 aa).

This sequence belongs to the VPS13 family. In terms of assembly, interacts (via FFAT motif) with VAPA and VAPB. Interacts with RAB7A. Interacts with XK.

It is found in the mitochondrion outer membrane. The protein resides in the endoplasmic reticulum membrane. It localises to the endosome membrane. The protein localises to the lysosome membrane. Its subcellular location is the lipid droplet. It is found in the golgi apparatus. The protein resides in the cytoplasmic vesicle. It localises to the secretory vesicle. The protein localises to the neuronal dense core vesicle. In terms of biological role, mediates the transfer of lipids between membranes at organelle contact sites. Required for the formation or stabilization of ER-mitochondria contact sites which enable transfer of lipids between the ER and mitochondria. Negatively regulates lipid droplet size and motility. Required for efficient lysosomal protein degradation. In Mus musculus (Mouse), this protein is Intermembrane lipid transfer protein VPS13A.